Reading from the N-terminus, the 277-residue chain is MKEPPVQLDLPDNPWLELRRLTPARIALGRTGTSIPTNAQLDFQFAHAQARDAVHLPFDPAGLSSQLAERGRDSLLLHSAAADRHSYLQRPDLGRRLSDESAQALRDHASANPGGVDLAVVVADGLSALAVHKHTLPFLTRMEEQTHAEGWSLSPVILVEQGRVAVADEIGQLLGAKMVVILIGERPGLSSPDSLGLYFTYNPKVGLTDAYRNCISNVRLEGLSYGMAAHRLLYLMREACRRQLSGVNLKDEAQVQTLESDDPDLMKGNFLLSSPDD.

Adenosylcob(III)alamin-binding residues include Val164, Glu185, and Cys214.

This sequence belongs to the EutC family. In terms of assembly, the basic unit is a heterodimer which dimerizes to form tetramers. The heterotetramers trimerize; 6 large subunits form a core ring with 6 small subunits projecting outwards. Adenosylcob(III)alamin serves as cofactor.

The protein resides in the bacterial microcompartment. It catalyses the reaction ethanolamine = acetaldehyde + NH4(+). It functions in the pathway amine and polyamine degradation; ethanolamine degradation. Catalyzes the deamination of various vicinal amino-alcohols to oxo compounds. Allows this organism to utilize ethanolamine as the sole source of nitrogen and carbon in the presence of external vitamin B12. This Pseudomonas fluorescens (strain SBW25) protein is Ethanolamine ammonia-lyase small subunit.